We begin with the raw amino-acid sequence, 196 residues long: GTP cyclohydrolase-2 (196 aa).

Arg-49 to Glu-53 contacts GTP. Zn(2+) contacts are provided by Cys-54, Cys-65, and Cys-67. Residues Gln-70, Glu-92–Arg-94, and Thr-114 each bind GTP. Residue Asp-126 is the Proton acceptor of the active site. Arg-128 serves as the catalytic Nucleophile. GTP-binding residues include Thr-149 and Lys-154.

The protein belongs to the GTP cyclohydrolase II family. Homodimer. Zn(2+) is required as a cofactor.

The catalysed reaction is GTP + 4 H2O = 2,5-diamino-6-hydroxy-4-(5-phosphoribosylamino)-pyrimidine + formate + 2 phosphate + 3 H(+). It functions in the pathway cofactor biosynthesis; riboflavin biosynthesis; 5-amino-6-(D-ribitylamino)uracil from GTP: step 1/4. In terms of biological role, catalyzes the conversion of GTP to 2,5-diamino-6-ribosylamino-4(3H)-pyrimidinone 5'-phosphate (DARP), formate and pyrophosphate. The polypeptide is GTP cyclohydrolase-2 (Enterobacter sp. (strain 638)).